The primary structure comprises 480 residues: UDP-glucose 6-dehydrogenase 5 (480 aa).

NAD(+) contacts are provided by residues 8-13 (GAGYVG), Asp-33, Arg-38, 86-90 (VNTPT), 127-128 (ST), and Glu-161. Substrate is bound by residues 157 to 161 (EFLAE), 216 to 223 (KLAANAFL), and 256 to 269 (RIGPKFLNASVGFG). Cys-272 functions as the Nucleophile in the catalytic mechanism. 272-275 (CFQK) is an NAD(+) binding site. A substrate-binding site is contributed by 334 to 335 (FK). Arg-342 is a binding site for NAD(+). Ser-393 bears the Phosphoserine mark. Arg-447 lines the substrate pocket.

The protein belongs to the UDP-glucose/GDP-mannose dehydrogenase family.

It carries out the reaction UDP-alpha-D-glucose + 2 NAD(+) + H2O = UDP-alpha-D-glucuronate + 2 NADH + 3 H(+). Its pathway is nucleotide-sugar biosynthesis; UDP-alpha-D-glucuronate biosynthesis; UDP-alpha-D-glucuronate from UDP-alpha-D-glucose: step 1/1. Functionally, involved in the biosynthesis of UDP-glucuronic acid (UDP-GlcA), providing nucleotide sugars for cell-wall polymers. This is UDP-glucose 6-dehydrogenase 5 (UGD5) from Oryza sativa subsp. japonica (Rice).